The chain runs to 193 residues: Pyridoxal 5'-phosphate synthase subunit PdxT (193 aa).

G50 to S52 serves as a coordination point for L-glutamine. C82 functions as the Nucleophile in the catalytic mechanism. L-glutamine contacts are provided by residues R109 and I136–R137. Residues H172 and E174 each act as charge relay system in the active site.

The protein belongs to the glutaminase PdxT/SNO family. In terms of assembly, in the presence of PdxS, forms a dodecamer of heterodimers. Only shows activity in the heterodimer.

It catalyses the reaction aldehydo-D-ribose 5-phosphate + D-glyceraldehyde 3-phosphate + L-glutamine = pyridoxal 5'-phosphate + L-glutamate + phosphate + 3 H2O + H(+). It carries out the reaction L-glutamine + H2O = L-glutamate + NH4(+). It participates in cofactor biosynthesis; pyridoxal 5'-phosphate biosynthesis. Functionally, catalyzes the hydrolysis of glutamine to glutamate and ammonia as part of the biosynthesis of pyridoxal 5'-phosphate. The resulting ammonia molecule is channeled to the active site of PdxS. The polypeptide is Pyridoxal 5'-phosphate synthase subunit PdxT (Streptococcus pneumoniae serotype 2 (strain D39 / NCTC 7466)).